Here is a 362-residue protein sequence, read N- to C-terminus: Sphingolipid delta(4)-desaturase (362 aa).

A compositionally biased stretch (low complexity) spans M1 to A10. A disordered region spans residues M1 to N20. Transmembrane regions (helical) follow at residues P60–L80, F90–H110, and T121–F143. The Histidine box-1 signature appears at H110–H114. The Histidine box-2 motif lies at H147–H151. 3 helical membrane passes run L169–Y189, P200–V220, and L228–F248. The Histidine box-3 signature appears at H290 to H294.

Belongs to the fatty acid desaturase type 1 family. DEGS subfamily.

It localises to the membrane. It catalyses the reaction an N-acylsphinganine + 2 Fe(II)-[cytochrome b5] + O2 + 2 H(+) = an N-acylsphing-4-enine + 2 Fe(III)-[cytochrome b5] + 2 H2O. Its pathway is lipid metabolism; sphingolipid metabolism. In terms of biological role, delta(4)-fatty-acid desaturase which introduces a double bond at the 4-position in the long-chain base (LCB) of ceramides. Required for sphingosine biosynthesis. The protein is Sphingolipid delta(4)-desaturase (dsd1) of Schizosaccharomyces pombe (strain 972 / ATCC 24843) (Fission yeast).